Here is a 114-residue protein sequence, read N- to C-terminus: Probable acid stress chaperone HdeA (114 aa).

The signal sequence occupies residues 1-26 (MIKALFNKNTALAAVTILALSGGAMA). Residues Cys46 and Cys94 are joined by a disulfide bond.

This sequence belongs to the HdeA family.

It is found in the periplasm. Required for optimal acid stress protection. Exhibits a chaperone-like activity only at low pH by suppressing non-specifically the aggregation of denaturated periplasmic proteins. This Brucella suis biovar 1 (strain 1330) protein is Probable acid stress chaperone HdeA.